Reading from the N-terminus, the 152-residue chain is Ribosomal RNA large subunit methyltransferase H (152 aa).

Residues Leu-68, Gly-100, and 119 to 124 (FGPMTW) each bind S-adenosyl-L-methionine.

It belongs to the RNA methyltransferase RlmH family. As to quaternary structure, homodimer.

The protein localises to the cytoplasm. The catalysed reaction is pseudouridine(1915) in 23S rRNA + S-adenosyl-L-methionine = N(3)-methylpseudouridine(1915) in 23S rRNA + S-adenosyl-L-homocysteine + H(+). Functionally, specifically methylates the pseudouridine at position 1915 (m3Psi1915) in 23S rRNA. This chain is Ribosomal RNA large subunit methyltransferase H, found in Rhodospirillum centenum (strain ATCC 51521 / SW).